The primary structure comprises 80 residues: MPVSVGSYGQQAQPSCFDRVKMGFMMGFAVGMAAGAMFGTFSCLRIGMRGRELMGGVGKTMMQSGGTFGTFMAIGMGIRC.

Residues 22-44 (MGFMMGFAVGMAAGAMFGTFSCL) traverse the membrane as a helical segment. The sufficient for antibacterial activity stretch occupies residues 42 to 60 (SCLRIGMRGRELMGGVGKT).

It belongs to the MGR2 family.

It is found in the mitochondrion inner membrane. In terms of biological role, has antibacterial activity against a variety of bacteria including S.aureus, P.aeruginosa and M.tuberculosis. Acts by inducing bacterial membrane breakage. Functionally, induces production of reactive oxygen species (ROS) which are necessary for cell proliferation. May play a role in inducing oxidative DNA damage and replicative senescence. May play a role in the coordination of mitochondrial morphology and cell proliferation. The chain is Reactive oxygen species modulator 1 (romo1) from Danio rerio (Zebrafish).